The following is a 289-amino-acid chain: Protease HtpX homolog (289 aa).

Helical transmembrane passes span 11 to 31 and 36 to 54; these read AALFGVLWAVLLALGALIGAG and APIWIMALVGVGTTFYGYW. Histidine 138 lines the Zn(2+) pocket. Glutamate 139 is an active-site residue. Histidine 142 contacts Zn(2+). Helical transmembrane passes span 153–173 and 182–202; these read VAAAVAGVITSVGQMLLFFGG and LAMIAMALLAPFAASLIQMAI. Glutamate 207 is a binding site for Zn(2+).

It belongs to the peptidase M48B family. It depends on Zn(2+) as a cofactor.

Its subcellular location is the cell membrane. This chain is Protease HtpX homolog, found in Pseudarthrobacter chlorophenolicus (strain ATCC 700700 / DSM 12829 / CIP 107037 / JCM 12360 / KCTC 9906 / NCIMB 13794 / A6) (Arthrobacter chlorophenolicus).